Reading from the N-terminus, the 143-residue chain is Transcriptional regulator MraZ (143 aa).

2 SpoVT-AbrB domains span residues 5-47 (EYQH…PMHE) and 76-119 (ATEC…SKVI).

The protein belongs to the MraZ family. Forms oligomers.

The protein resides in the cytoplasm. The protein localises to the nucleoid. The protein is Transcriptional regulator MraZ of Bacillus subtilis (strain 168).